The following is a 250-amino-acid chain: 5'/3'-nucleotidase SurE (250 aa).

A divalent metal cation contacts are provided by Asp9, Asp10, Ser40, and Asn93.

It belongs to the SurE nucleotidase family. A divalent metal cation serves as cofactor.

The protein resides in the cytoplasm. It catalyses the reaction a ribonucleoside 5'-phosphate + H2O = a ribonucleoside + phosphate. It carries out the reaction a ribonucleoside 3'-phosphate + H2O = a ribonucleoside + phosphate. The enzyme catalyses [phosphate](n) + H2O = [phosphate](n-1) + phosphate + H(+). Nucleotidase with a broad substrate specificity as it can dephosphorylate various ribo- and deoxyribonucleoside 5'-monophosphates and ribonucleoside 3'-monophosphates with highest affinity to 3'-AMP. Also hydrolyzes polyphosphate (exopolyphosphatase activity) with the preference for short-chain-length substrates (P20-25). Might be involved in the regulation of dNTP and NTP pools, and in the turnover of 3'-mononucleotides produced by numerous intracellular RNases (T1, T2, and F) during the degradation of various RNAs. This is 5'/3'-nucleotidase SurE from Yersinia enterocolitica serotype O:8 / biotype 1B (strain NCTC 13174 / 8081).